We begin with the raw amino-acid sequence, 423 residues long: Serine hydroxymethyltransferase (423 aa).

(6S)-5,6,7,8-tetrahydrofolate contacts are provided by residues L118 and 122-124 (GHL). K227 carries the N6-(pyridoxal phosphate)lysine modification. Residue 351-353 (SPF) coordinates (6S)-5,6,7,8-tetrahydrofolate.

The protein belongs to the SHMT family. As to quaternary structure, homodimer. The cofactor is pyridoxal 5'-phosphate.

The protein localises to the cytoplasm. It carries out the reaction (6R)-5,10-methylene-5,6,7,8-tetrahydrofolate + glycine + H2O = (6S)-5,6,7,8-tetrahydrofolate + L-serine. Its pathway is one-carbon metabolism; tetrahydrofolate interconversion. It participates in amino-acid biosynthesis; glycine biosynthesis; glycine from L-serine: step 1/1. Its function is as follows. Catalyzes the reversible interconversion of serine and glycine with tetrahydrofolate (THF) serving as the one-carbon carrier. This reaction serves as the major source of one-carbon groups required for the biosynthesis of purines, thymidylate, methionine, and other important biomolecules. Also exhibits THF-independent aldolase activity toward beta-hydroxyamino acids, producing glycine and aldehydes, via a retro-aldol mechanism. The chain is Serine hydroxymethyltransferase from Petrotoga mobilis (strain DSM 10674 / SJ95).